A 238-amino-acid polypeptide reads, in one-letter code: Monocyte to macrophage differentiation factor (238 aa).

Over 1–28 (MQFRNRFQRFMNHRAPANGRYKPTCYEH) the chain is Cytoplasmic. A helical transmembrane segment spans residues 29–49 (AANCYTHAFLIVPAIVGSALL). Over 50 to 61 (HRLSDDCWEKIT) the chain is Lumenal. A helical membrane pass occupies residues 62–82 (AWIYGMGLCALFIVSTVFHIV). Residues 83 to 101 (SWKKSHLRTVEHCFHMCDR) lie on the Cytoplasmic side of the membrane. A helical transmembrane segment spans residues 102–122 (MVIYFFIAASYAPWLNLRELG). Residue Pro123 is a topological domain, lumenal. A helical membrane pass occupies residues 124–144 (LASHMRWFIWLMAAGGTIYVF). Residues 145–151 (LYHEKYK) lie on the Cytoplasmic side of the membrane. The helical transmembrane segment at 152–172 (VVELFFYLTMGFSPALVVTSM) threads the bilayer. At 173-174 (NN) the chain is on the lumenal side. A helical membrane pass occupies residues 175–195 (TDGLQELACGGLIYCLGVVFF). Residues 196–198 (KSD) lie on the Cytoplasmic side of the membrane. The helical transmembrane segment at 199–219 (GIIPFAHAIWHLFVATAAAVH) threads the bilayer. The Lumenal segment spans residues 220–238 (YYAIWKYLYRSPTDFIRHL).

It belongs to the ADIPOR family. As to expression, preferentially expressed in the brain.

Its subcellular location is the late endosome membrane. The protein localises to the lysosome membrane. In terms of biological role, is involved in the dynamics of lysosomal membranes associated with microglial activation following brain lesion. The chain is Monocyte to macrophage differentiation factor from Rattus norvegicus (Rat).